The primary structure comprises 390 residues: Terminal nucleotidyltransferase 5C (390 aa).

Belongs to the TENT family.

The protein localises to the nucleus. It is found in the cytoplasm. The protein resides in the cytoskeleton. Its subcellular location is the microtubule organizing center. It localises to the centrosome. It carries out the reaction RNA(n) + ATP = RNA(n)-3'-adenine ribonucleotide + diphosphate. Its function is as follows. Catalyzes the transfer of one adenosine molecule from an ATP to an mRNA poly(A) tail bearing a 3'-OH terminal group and enhances mRNA stability and gene expression. The polypeptide is Terminal nucleotidyltransferase 5C (Gallus gallus (Chicken)).